A 233-amino-acid polypeptide reads, in one-letter code: uncharacterized protein (233 aa).

This is an uncharacterized protein from Acanthamoeba polyphaga (Amoeba).